We begin with the raw amino-acid sequence, 421 residues long: Nuclear envelope integral membrane protein 2 (421 aa).

Positions 1–22 (MLPRLWWLVLWLQPLATLPASA) are cleaved as a signal peptide. The next 6 helical transmembrane spans lie at 64-84 (YMWS…IVYI), 147-167 (NIVD…FLYA), 175-195 (VFYY…FVLL), 206-226 (TFGA…CQLM), 238-258 (MYIL…CYSH), and 281-301 (LVYT…VLLF).

Belongs to the NEMP family. As to expression, in the ovary, highly expressed in somatic cells.

It localises to the nucleus inner membrane. The sequence is that of Nuclear envelope integral membrane protein 2 (Nemp2) from Mus musculus (Mouse).